The chain runs to 142 residues: Struthiocalcin-2 (142 aa).

Intrachain disulfides connect C6–C17, C34–C138, and C113–C130. In terms of domain architecture, C-type lectin spans 13–139 (FDGRCYGFFP…CSDRKPFICE (127 aa)). Phosphoserine occurs at positions 62, 66, and 68.

It is found in the secreted. The protein resides in the extracellular space. It localises to the extracellular matrix. This Struthio camelus (Common ostrich) protein is Struthiocalcin-2.